The following is a 1446-amino-acid chain: ABC-type transporter oblD (1446 aa).

N-linked (GlcNAc...) asparagine glycosylation is found at N9, N28, N222, N281, and N305. In terms of domain architecture, ABC transporter 1 spans 104-357; it reads LEVLSLVSKA…FLDMGFVCPD (254 aa). The next 6 helical transmembrane spans lie at 468–488, 502–522, 548–568, 577–597, 610–630, and 719–739; these read VTIS…SIFY, ALLF…MLTL, MIMD…VLYF, GAFF…SMFF, ALPF…FTIP, and IGVI…ATDF. One can recognise an ABC transporter 2 domain in the interval 796–1038; the sequence is FQWKDVCFDI…ILIDYFVRNG (243 aa). 832 to 839 is an ATP binding site; sequence GVSGAGKT. A run of 5 helical transmembrane segments spans residues 1147–1167, 1177–1197, 1217–1237, 1265–1285, and 1301–1321; these read ALCV…PNTI, IFML…HFVA, FIIS…VLMF, LMVW…IAAF, and LCLI…FWIF. Residues N1344 and N1359 are each glycosylated (N-linked (GlcNAc...) asparagine). A helical transmembrane segment spans residues 1412–1432; sequence FGLMWVFIVFNIFAACLLYWW.

This sequence belongs to the ABC transporter superfamily. ABCG family. PDR (TC 3.A.1.205) subfamily.

It localises to the cell membrane. Functionally, ABC-type transporter; part of the gene cluster that mediates the biosynthesis of the sesterterpenes ophiobolins, fungal phytotoxins with potential anti-cancer activities. Acts as a specific transporter involved in ophiobolins secretion. This Aspergillus clavatus (strain ATCC 1007 / CBS 513.65 / DSM 816 / NCTC 3887 / NRRL 1 / QM 1276 / 107) protein is ABC-type transporter oblD.